Here is a 395-residue protein sequence, read N- to C-terminus: MLNTRLIAMSTSDGAPETKKQRPESSSNGSKDQNGTEAGAEGDSRDKVALITGITGQDGSYLAEFLLKKDYEVHGIIRRASTFNTTRIEHLYADPKAHKGGRMKLHYGDMTDSSSLVKIINMVKPTEIYNLAAQSHVKVSFDLSEYTAEVDAVGTLRILDAIRTCGMEKNVRFYQASTSELYGKVVETPQNEQTPFYPRSPYACAKMYGFWIVINYREAYNMYACNGILFNHESPRRGENFVTRKITRSVAKIYHKQMEYFELGNLDSKRDWGHASDYVEAMWMMLQRESPSDYVIATGETHSVREFVEAAFKHIDREITWKGKGVDEVGVENGTGIVRVRINPKYFRPTEVDLLQGDASKANRELNWTPKVTFVELVSDMMKADIELMRKNPIA.

Composition is skewed to polar residues over residues Met1–Asp13 and Glu24–Thr36. Residues Met1 to Ser44 are disordered. NADP(+) contacts are provided by residues Gly53 to Asp58, Asp109 to Met110, Leu131 to Ser135, and Tyr146. Thr178 is an active-site residue. Catalysis depends on nucleophile residues Glu180 and Tyr202. NADP(+)-binding residues include Lys206, His232, and Arg237.

The protein belongs to the NAD(P)-dependent epimerase/dehydratase family. GDP-mannose 4,6-dehydratase subfamily. Requires NADP(+) as cofactor.

It carries out the reaction GDP-alpha-D-mannose = GDP-4-dehydro-alpha-D-rhamnose + H2O. The protein operates within nucleotide-sugar biosynthesis; GDP-L-fucose biosynthesis via de novo pathway; GDP-L-fucose from GDP-alpha-D-mannose: step 1/2. In terms of biological role, catalyzes the conversion of GDP-D-mannose to GDP-4-dehydro-6-deoxy-D-mannose (also known as GDP-4-keto-6-deoxy-D-mannose or GDP-4-dehydro-alpha-D-rhamnose), an essential step in the synthesis of GDP-fucose from GDP-mannose. The chain is GDP-mannose 4,6 dehydratase (Gmd) from Drosophila melanogaster (Fruit fly).